The primary structure comprises 158 residues: 6,7-dimethyl-8-ribityllumazine synthase (158 aa).

5-amino-6-(D-ribitylamino)uracil-binding positions include phenylalanine 22, 57 to 59 (AYE), and 81 to 83 (AVI). 86–87 (GT) serves as a coordination point for (2S)-2-hydroxy-3-oxobutyl phosphate. Histidine 89 functions as the Proton donor in the catalytic mechanism. Phenylalanine 114 contacts 5-amino-6-(D-ribitylamino)uracil. Arginine 128 contributes to the (2S)-2-hydroxy-3-oxobutyl phosphate binding site.

The protein belongs to the DMRL synthase family. Forms an icosahedral capsid composed of 60 subunits, arranged as a dodecamer of pentamers.

The catalysed reaction is (2S)-2-hydroxy-3-oxobutyl phosphate + 5-amino-6-(D-ribitylamino)uracil = 6,7-dimethyl-8-(1-D-ribityl)lumazine + phosphate + 2 H2O + H(+). Its pathway is cofactor biosynthesis; riboflavin biosynthesis; riboflavin from 2-hydroxy-3-oxobutyl phosphate and 5-amino-6-(D-ribitylamino)uracil: step 1/2. Its function is as follows. Catalyzes the formation of 6,7-dimethyl-8-ribityllumazine by condensation of 5-amino-6-(D-ribitylamino)uracil with 3,4-dihydroxy-2-butanone 4-phosphate. This is the penultimate step in the biosynthesis of riboflavin. The protein is 6,7-dimethyl-8-ribityllumazine synthase of Pseudoalteromonas atlantica (strain T6c / ATCC BAA-1087).